A 278-amino-acid polypeptide reads, in one-letter code: Rhomboid protease GlpG (278 aa).

Transmembrane regions (helical) follow at residues 94 to 114 (AGPLTLSVMVLCIAIYILMLI), 143 to 163 (AFLHFSLLHILFNLMWWWYLG), 175 to 195 (LLVLTIVSAVFSGWGQSLFSG), 196 to 216 (ANFGGLSGVVYALMGYVWLTG), 224 to 241 (ISLPRGLMAFSVLWLIAG), and 245 to 267 (ILGLSIANAAHVSGLIIGLLMAF). Ser-202 serves as the catalytic Nucleophile. His-255 is a catalytic residue.

It belongs to the peptidase S54 family.

It is found in the cell inner membrane. The catalysed reaction is Cleaves type-1 transmembrane domains using a catalytic dyad composed of serine and histidine that are contributed by different transmembrane domains.. Rhomboid-type serine protease that catalyzes intramembrane proteolysis. In Yersinia pestis bv. Antiqua (strain Antiqua), this protein is Rhomboid protease GlpG.